We begin with the raw amino-acid sequence, 798 residues long: Acetamidase regulatory protein (798 aa).

Residues 20–50 (CVHCHRRKVRCDARLVGLPCSNCRSAGKTDC) constitute a DNA-binding region (zn(2)-C6 fungal-type). Disordered stretches follow at residues 68–96 (VPIR…PPNA), 115–172 (ANRV…ESRA), and 632–714 (LRTT…TLSA). Low complexity-rich tracts occupy residues 82–94 (KPIS…SEPP) and 133–147 (TRSN…QYQN). Residues 632–641 (LRTTTSDRPR) show a composition bias toward basic and acidic residues. Residues 644 to 663 (SNLSNNSTNSPASQQKNTSG) show a composition bias toward polar residues. Over residues 678-687 (PSAPSIPPLQ) the composition is skewed to pro residues.

It is found in the nucleus. Positively regulates the expression of 5 genes involved in the catabolism of certain amides (amdS), omega amino acids (gatA and gabA), and lactams (lamA and lamB) in the presence of omega amino acid inducers. In Emericella nidulans (strain FGSC A4 / ATCC 38163 / CBS 112.46 / NRRL 194 / M139) (Aspergillus nidulans), this protein is Acetamidase regulatory protein (amdR).